The primary structure comprises 297 residues: Transcriptional regulator protein Pur-beta (297 aa).

Disordered regions lie at residues 1–26 (MADGDSGSERGGSSGGLQHFQREQET) and 275–297 (QERHRDKMYERREESEGEDVDDD). A2 is subject to N-acetylalanine. Positions 23–246 (EQETQELASK…LRVSEVKPSY (224 aa)) are DNA-binding. Basic and acidic residues predominate over residues 275–288 (QERHRDKMYERREE).

It belongs to the PUR DNA-binding protein family.

The protein localises to the nucleus. Functionally, transcriptional regulator which can act as an activator or a repressor. The sequence is that of Transcriptional regulator protein Pur-beta (purb) from Danio rerio (Zebrafish).